The chain runs to 318 residues: Beta-ketoacyl-[acyl-carrier-protein] synthase III (318 aa).

Catalysis depends on residues Cys112 and His245. The ACP-binding stretch occupies residues 246-250; the sequence is QANIR. Asn275 is a catalytic residue.

Belongs to the thiolase-like superfamily. FabH family. In terms of assembly, homodimer.

Its subcellular location is the cytoplasm. It carries out the reaction malonyl-[ACP] + acetyl-CoA + H(+) = 3-oxobutanoyl-[ACP] + CO2 + CoA. It participates in lipid metabolism; fatty acid biosynthesis. Its function is as follows. Catalyzes the condensation reaction of fatty acid synthesis by the addition to an acyl acceptor of two carbons from malonyl-ACP. Catalyzes the first condensation reaction which initiates fatty acid synthesis and may therefore play a role in governing the total rate of fatty acid production. Possesses both acetoacetyl-ACP synthase and acetyl transacylase activities. Its substrate specificity determines the biosynthesis of branched-chain and/or straight-chain of fatty acids. The sequence is that of Beta-ketoacyl-[acyl-carrier-protein] synthase III from Nitrosomonas europaea (strain ATCC 19718 / CIP 103999 / KCTC 2705 / NBRC 14298).